We begin with the raw amino-acid sequence, 225 residues long: NAD(P)H-quinone oxidoreductase subunit K, chloroplastic (225 aa).

4 residues coordinate [4Fe-4S] cluster: cysteine 43, cysteine 44, cysteine 108, and cysteine 139.

The protein belongs to the complex I 20 kDa subunit family. In terms of assembly, NDH is composed of at least 16 different subunits, 5 of which are encoded in the nucleus. It depends on [4Fe-4S] cluster as a cofactor.

The protein localises to the plastid. It is found in the chloroplast thylakoid membrane. The catalysed reaction is a plastoquinone + NADH + (n+1) H(+)(in) = a plastoquinol + NAD(+) + n H(+)(out). It catalyses the reaction a plastoquinone + NADPH + (n+1) H(+)(in) = a plastoquinol + NADP(+) + n H(+)(out). Functionally, NDH shuttles electrons from NAD(P)H:plastoquinone, via FMN and iron-sulfur (Fe-S) centers, to quinones in the photosynthetic chain and possibly in a chloroplast respiratory chain. The immediate electron acceptor for the enzyme in this species is believed to be plastoquinone. Couples the redox reaction to proton translocation, and thus conserves the redox energy in a proton gradient. This Barbarea verna (Land cress) protein is NAD(P)H-quinone oxidoreductase subunit K, chloroplastic.